Reading from the N-terminus, the 665-residue chain is Pentatricopeptide repeat-containing protein At3g02490, mitochondrial (665 aa).

The N-terminal 37 residues, 1-37 (MRYQWRSLLFRSYRSSPRPFLSHHSRFQVISNSTRSF), are a transit peptide targeting the mitochondrion. PPR repeat units lie at residues 280-314 (DEKT…GYEM), 315-349 (EMET…SISN), 352-388 (TPHC…GNVV), 389-423 (PDVM…GYVP), 424-458 (SGDL…GNHL), 459-493 (DDKA…EGVS), 495-530 (AGYA…QLKP), and 536-570 (KIMV…GFPP).

This sequence belongs to the PPR family. P subfamily.

It localises to the mitochondrion. The polypeptide is Pentatricopeptide repeat-containing protein At3g02490, mitochondrial (Arabidopsis thaliana (Mouse-ear cress)).